The primary structure comprises 247 residues: tRNA pseudouridine synthase A (247 aa).

Asp53 functions as the Nucleophile in the catalytic mechanism. Tyr111 contacts substrate.

It belongs to the tRNA pseudouridine synthase TruA family. Homodimer.

The enzyme catalyses uridine(38/39/40) in tRNA = pseudouridine(38/39/40) in tRNA. Functionally, formation of pseudouridine at positions 38, 39 and 40 in the anticodon stem and loop of transfer RNAs. In Bacillus pumilus (strain SAFR-032), this protein is tRNA pseudouridine synthase A.